The primary structure comprises 463 residues: Mitochondrial dynamics protein MIEF1 (463 aa).

At 1–23 (MAGAGERKGKKDDNGIGTAIDFV) the chain is on the mitochondrial intermembrane side. A helical membrane pass occupies residues 24–46 (LSNARLVLGVGGAAMLGIATLAV). The Cytoplasmic segment spans residues 47-463 (KRMYDRAISA…LSEPEVLLQT (417 aa)). The interval 49–195 (MYDRAISAPT…LSGSLYDDLQ (147 aa)) is dimerization. Phosphoserine is present on residues serine 55, serine 59, serine 79, and serine 94. The segment at 57–77 (PTSPTRLSHSGKRSWEEPNWM) is disordered. The disordered stretch occupies residues 96–123 (QTLPTDSSTFDTDTFCPPRPKPVARKGQ). Residues 100–110 (TDSSTFDTDTF) show a composition bias toward low complexity. The segment at 160-169 (AAVDICAELR) is important for interaction with DNM1L. The ADP site is built by serine 187, serine 189, and histidine 201. The important for interaction with DNM1L stretch occupies residues 234–242 (RRENPEYFP). Positions 340, 342, and 368 each coordinate ADP.

The protein belongs to the SMCR7 family. Homodimer. Interacts with DNM1L. As to expression, expression is relatively high in heart, skeletal muscle, pancreas and kidney.

It localises to the mitochondrion outer membrane. Mitochondrial outer membrane protein which regulates mitochondrial fission/fusion dynamics. Promotes the recruitment and association of the fission mediator dynamin-related protein 1 (DNM1L) to the mitochondrial surface independently of the mitochondrial fission FIS1 and MFF proteins. Regulates DNM1L GTPase activity and DNM1L oligomerization. Binds ADP and can also bind GDP, although with lower affinity. Does not bind CDP, UDP, ATP, AMP or GTP. Inhibits DNM1L GTPase activity in the absence of bound ADP. Requires ADP to stimulate DNM1L GTPase activity and the assembly of DNM1L into long, oligomeric tubules with a spiral pattern, as opposed to the ring-like DNM1L oligomers observed in the absence of bound ADP. Does not require ADP for its function in recruiting DNM1L. In Homo sapiens (Human), this protein is Mitochondrial dynamics protein MIEF1.